A 422-amino-acid polypeptide reads, in one-letter code: Serine protease inhibitor A3A (422 aa).

An N-terminal signal peptide occupies residues Met-1 to Ala-17. Asn-218, Asn-230, and Asn-271 each carry an N-linked (GlcNAc...) asparagine glycan. Residues His-369 to Val-394 form an RCL region.

It belongs to the serpin family.

The protein localises to the secreted. The protein is Serine protease inhibitor A3A (Serpina3a) of Mus musculus (Mouse).